The sequence spans 94 residues: Large ribosomal subunit protein bL25 (94 aa).

This sequence belongs to the bacterial ribosomal protein bL25 family. As to quaternary structure, part of the 50S ribosomal subunit; part of the 5S rRNA/L5/L18/L25 subcomplex. Contacts the 5S rRNA. Binds to the 5S rRNA independently of L5 and L18.

This is one of the proteins that binds to the 5S RNA in the ribosome where it forms part of the central protuberance. This is Large ribosomal subunit protein bL25 from Salmonella gallinarum (strain 287/91 / NCTC 13346).